A 352-amino-acid chain; its full sequence is Macrophage-capping protein (352 aa).

At Met-1 the chain carries N-acetylmethionine. Residues Glu-27–Gly-75 form a Gelsolin-like 1 repeat. Positions Arg-139–Lys-148 match the Nuclear localization signal motif. Gelsolin-like repeat units lie at residues Ile-150–Asn-190 and Met-265–Gln-311. Ser-341 is modified (phosphoserine).

This sequence belongs to the villin/gelsolin family. Interacts with NUP62. Interacts with NUTF2 and RAN; involved in CAPG nuclear import. Phosphorylated. Nuclear GCAP39 is more highly phosphorylated than cytoplasmic GCAP39. Present in a large variety of tissues and is particularly abundant in kidney and lung. Highly expressed in macrophages (at protein level).

The protein resides in the nucleus. The protein localises to the cytoplasm. It localises to the melanosome. It is found in the cell projection. Its subcellular location is the lamellipodium. The protein resides in the ruffle. Functionally, calcium-sensitive protein which reversibly blocks the barbed ends of actin filaments but does not sever preformed actin filaments. May play an important role in macrophage function. May play a role in regulating cytoplasmic and/or nuclear structures through potential interactions with actin. May bind DNA. Uncapping occurs either when Ca(2+) falls or when the concentration of polyphosphoinositide rises, both at low and high Ca(2+). This is Macrophage-capping protein (Capg) from Mus musculus (Mouse).